The chain runs to 524 residues: uncharacterized protein (524 aa).

The first 26 residues, 1 to 26, serve as a signal peptide directing secretion; it reads MLKIDMWFKLKSLGFSLISLQALLAS. Cys27 carries the N-palmitoyl cysteine lipid modification. Residue Cys27 is the site of S-diacylglycerol cysteine attachment. The segment at 37–68 is disordered; the sequence is IEEKNDSTTDNNATPFKDEQSDQGTEVNQQPK. Positions 58-68 are enriched in polar residues; it reads DQGTEVNQQPK.

Belongs to the MG067/MG068/MG395 family.

Its subcellular location is the cell membrane. This is an uncharacterized protein from Mycoplasma genitalium (strain ATCC 33530 / DSM 19775 / NCTC 10195 / G37) (Mycoplasmoides genitalium).